A 429-amino-acid polypeptide reads, in one-letter code: Glutamate-1-semialdehyde 2,1-aminomutase 2 (429 aa).

The residue at position 268 (K268) is an N6-(pyridoxal phosphate)lysine.

Belongs to the class-III pyridoxal-phosphate-dependent aminotransferase family. HemL subfamily. As to quaternary structure, homodimer. Pyridoxal 5'-phosphate serves as cofactor.

It is found in the cytoplasm. It carries out the reaction (S)-4-amino-5-oxopentanoate = 5-aminolevulinate. It participates in porphyrin-containing compound metabolism; protoporphyrin-IX biosynthesis; 5-aminolevulinate from L-glutamyl-tRNA(Glu): step 2/2. This Bacillus velezensis (strain DSM 23117 / BGSC 10A6 / LMG 26770 / FZB42) (Bacillus amyloliquefaciens subsp. plantarum) protein is Glutamate-1-semialdehyde 2,1-aminomutase 2.